Consider the following 410-residue polypeptide: Peptidase T (410 aa).

H79 contributes to the Zn(2+) binding site. Residue D81 is part of the active site. D142 is a binding site for Zn(2+). Catalysis depends on E176, which acts as the Proton acceptor. Residues E177, D199, and H381 each coordinate Zn(2+).

It belongs to the peptidase M20B family. Zn(2+) serves as cofactor.

It localises to the cytoplasm. It carries out the reaction Release of the N-terminal residue from a tripeptide.. Cleaves the N-terminal amino acid of tripeptides. The protein is Peptidase T of Bacillus thuringiensis (strain Al Hakam).